The sequence spans 347 residues: Lipoyl synthase (347 aa).

Residues C55, C60, C66, C81, C85, C88, and S292 each coordinate [4Fe-4S] cluster. Residues 67–281 enclose the Radical SAM core domain; it reads WEDREASFLI…SEAAYDMGFP (215 aa).

The protein belongs to the radical SAM superfamily. Lipoyl synthase family. [4Fe-4S] cluster serves as cofactor.

Its subcellular location is the cytoplasm. It carries out the reaction [[Fe-S] cluster scaffold protein carrying a second [4Fe-4S](2+) cluster] + N(6)-octanoyl-L-lysyl-[protein] + 2 oxidized [2Fe-2S]-[ferredoxin] + 2 S-adenosyl-L-methionine + 4 H(+) = [[Fe-S] cluster scaffold protein] + N(6)-[(R)-dihydrolipoyl]-L-lysyl-[protein] + 4 Fe(3+) + 2 hydrogen sulfide + 2 5'-deoxyadenosine + 2 L-methionine + 2 reduced [2Fe-2S]-[ferredoxin]. The protein operates within protein modification; protein lipoylation via endogenous pathway; protein N(6)-(lipoyl)lysine from octanoyl-[acyl-carrier-protein]: step 2/2. Its function is as follows. Catalyzes the radical-mediated insertion of two sulfur atoms into the C-6 and C-8 positions of the octanoyl moiety bound to the lipoyl domains of lipoate-dependent enzymes, thereby converting the octanoylated domains into lipoylated derivatives. In Corynebacterium urealyticum (strain ATCC 43042 / DSM 7109), this protein is Lipoyl synthase.